We begin with the raw amino-acid sequence, 1766 residues long: DNA-directed RNA polymerase II subunit RPB1-A (1766 aa).

4 residues coordinate Zn(2+): Cys69, Cys72, Cys79, and His82. 3 residues coordinate Mg(2+): Asp487, Asp489, and Asp491. The interval Pro813–Glu825 is bridging helix. Positions His1660–Gln1766 are disordered. The span at Arg1706 to Asp1716 shows a compositional bias: basic and acidic residues. Positions Pro1742–Ala1756 are enriched in low complexity.

It belongs to the RNA polymerase beta' chain family. As to quaternary structure, component of the RNA polymerase II (Pol II) complex consisting of 12 subunits.

The protein resides in the nucleus. The catalysed reaction is RNA(n) + a ribonucleoside 5'-triphosphate = RNA(n+1) + diphosphate. In terms of biological role, DNA-dependent RNA polymerase catalyzes the transcription of DNA into RNA using the four ribonucleoside triphosphates as substrates. Largest and catalytic component of RNA polymerase II which synthesizes mRNA precursors and many functional non-coding RNAs. Forms the polymerase active center together with the second largest subunit. Pol II is the central component of the basal RNA polymerase II transcription machinery. It is composed of mobile elements that move relative to each other. RPB1 is part of the core element with the central large cleft, the clamp element that moves to open and close the cleft and the jaws that are thought to grab the incoming DNA template. At the start of transcription, a single-stranded DNA template strand of the promoter is positioned within the central active site cleft of Pol II. A bridging helix emanates from RPB1 and crosses the cleft near the catalytic site and is thought to promote translocation of Pol II by acting as a ratchet that moves the RNA-DNA hybrid through the active site by switching from straight to bent conformations at each step of nucleotide addition. During transcription elongation, Pol II moves on the template as the transcript elongates. This is DNA-directed RNA polymerase II subunit RPB1-A (TRP4.8) from Trypanosoma brucei brucei.